The following is a 219-amino-acid chain: 2-hydroxy-3-keto-5-methylthiopentenyl-1-phosphate phosphatase (219 aa).

The protein belongs to the HAD-like hydrolase superfamily. MtnX family.

It catalyses the reaction 2-hydroxy-5-methylsulfanyl-3-oxopent-1-enyl phosphate + H2O = 1,2-dihydroxy-5-(methylsulfanyl)pent-1-en-3-one + phosphate. The protein operates within amino-acid biosynthesis; L-methionine biosynthesis via salvage pathway; L-methionine from S-methyl-5-thio-alpha-D-ribose 1-phosphate: step 4/6. Dephosphorylates 2-hydroxy-3-keto-5-methylthiopentenyl-1-phosphate (HK-MTPenyl-1-P) yielding 1,2-dihydroxy-3-keto-5-methylthiopentene (DHK-MTPene). The sequence is that of 2-hydroxy-3-keto-5-methylthiopentenyl-1-phosphate phosphatase from Exiguobacterium sibiricum (strain DSM 17290 / CCUG 55495 / CIP 109462 / JCM 13490 / 255-15).